Reading from the N-terminus, the 248-residue chain is 1,2-phenylacetyl-CoA epoxidase, subunit C (248 aa).

Substrate-binding positions include 76–79 and 177–179; these read QFSN and IAL.

As to quaternary structure, forms a stable heterotetramer (dimer of heterodimers) with PaaA and a stable heterodimer with PaaB.

Its pathway is aromatic compound metabolism; phenylacetate degradation. Its function is as follows. Component of 1,2-phenylacetyl-CoA epoxidase multicomponent enzyme system which catalyzes the reduction of phenylacetyl-CoA (PA-CoA) to form 1,2-epoxyphenylacetyl-CoA. The subunit C may be essential for structural integrity of the alpha subunit. This Escherichia coli (strain K12) protein is 1,2-phenylacetyl-CoA epoxidase, subunit C (paaC).